The following is a 163-amino-acid chain: MIKVLVIADTHGQNQRWIELKNYHNPDVIIHAGDHMTTKQFMDQNATFWVAGNNDSIGNEIEIFQLGQINFVLMHGHQAPRDNLKKWYQLLVLKAQQYPCDVLIFGHSHIEYTNKINMIQLINPGSLQLPRNQTNTPSYCTFIVNKDELTDLTIHYYQASKVS.

Mn(2+) is bound by residues D9, H11, D34, N53, H75, H107, and H109.

The protein belongs to the metallophosphoesterase superfamily. YfcE family. Mn(2+) is required as a cofactor.

The chain is Probable metallophosphoesterase MG207 from Mycoplasma genitalium (strain ATCC 33530 / DSM 19775 / NCTC 10195 / G37) (Mycoplasmoides genitalium).